The primary structure comprises 134 residues: Small ribosomal subunit protein uS8c (134 aa).

It belongs to the universal ribosomal protein uS8 family. In terms of assembly, part of the 30S ribosomal subunit.

The protein localises to the plastid. Its subcellular location is the chloroplast. In terms of biological role, one of the primary rRNA binding proteins, it binds directly to 16S rRNA central domain where it helps coordinate assembly of the platform of the 30S subunit. This is Small ribosomal subunit protein uS8c (rps8) from Arabidopsis thaliana (Mouse-ear cress).